The chain runs to 1198 residues: Rac guanine nucleotide exchange factor B (1198 aa).

A disordered region spans residues 1-104 (MFSNFFGSSK…QHQGVITSLQ (104 aa)). Over residues 8 to 20 (SSKRNTIASSSSS) the composition is skewed to low complexity. A compositionally biased stretch (basic and acidic residues) spans 21 to 34 (SKKDKDNGKDESSK). Polar residues predominate over residues 35–58 (LKNSGSSTLPKPITNNESGNNFIT). A compositionally biased stretch (low complexity) spans 59–97 (SPSVSSPLISPLSSSPSPLLSSSSNSIQSTSHQQQQQHQ). The Calponin-homology (CH) 1 domain maps to 126 to 232 (SSLEQTARKW…NIVVLGKHAS (107 aa)). The disordered stretch occupies residues 260–284 (FGGNHNNNNNNNNNNNTSNGDLSPV). The span at 263–275 (NHNNNNNNNNNNN) shows a compositional bias: low complexity. Calponin-homology (CH) domains are found at residues 341 to 449 (PELQ…NKMY) and 511 to 619 (PEDM…ENFD). A DH domain is found at 632 to 846 (RRQKVIEEII…KRVADHVNES (215 aa)). The PH domain occupies 876 to 1026 (TYIREGFLEI…WMEDLRSCLQ (151 aa)). Acidic residues predominate over residues 940 to 952 (GEACVDGDDDGGE). Disordered stretches follow at residues 940–989 (GEAC…SNKS) and 1076–1198 (NNNN…IDNQ). 2 stretches are compositionally biased toward low complexity: residues 977-989 (NSNN…SNKS) and 1076-1118 (NNNN…NNND). Acidic residues predominate over residues 1155–1167 (DETISDTESDDYE). Positions 1188 to 1198 (FSDTIKNIDNQ) are enriched in polar residues.

In terms of assembly, binds to F-actin.

It is found in the late endosome. Functionally, involved in the regulation of the late steps of the endocytic pathway. The sequence is that of Rac guanine nucleotide exchange factor B (gxcB) from Dictyostelium discoideum (Social amoeba).